We begin with the raw amino-acid sequence, 338 residues long: UPF0284 protein PAE0372 (338 aa).

It belongs to the UPF0284 family.

This chain is UPF0284 protein PAE0372, found in Pyrobaculum aerophilum (strain ATCC 51768 / DSM 7523 / JCM 9630 / CIP 104966 / NBRC 100827 / IM2).